The chain runs to 488 residues: MKFKDLRDFVQQLEQRGELKRIQMPISPVLEMTEICDRTLRAKGPALLFENPVGFDIPVLGNLFGTPERVAMGMGAEAVTELREIGKLLAFLKEPEPPKGLKDAWSKLPIFRKVIAMAPKVVKDAPCQEIVIEGDDVDLGMLPVQTCWPGDVAPLITWGLTVTKGPNKERQNLGIYRQQVIGRNKIIMRWLSHRGGALDFRDWCVKHPGEPYPVAVALGADPATILGAVTPVPDSLSEYAFAGLLRGSRTELIKCRGSNLQVPASAEIVLEGVIHPGEMANEGPYGDHTGYYNEVDSFPVLTVERITHRIKPIYHSTYTGRPPDEPAILGVALNEVFVPILQKQFPEIVDFYLPPEGCSYRMAVVTIKKQYPGHAKRVMLGVWSFLRQFMYTKFVIVTDDDINARDWNDVIWAITTRMDPKRDTVMIDNTPIDYLDFASPVSGLGSKMGLDATNKWPGETTREWGRAIVKDEATTRRVDEIWTQLGID.

Asn-172 lines the Mn(2+) pocket. Prenylated FMN contacts are provided by residues 175–177 (IYR), 189–191 (RWL), and 194–195 (RG). Glu-238 serves as a coordination point for Mn(2+). The Proton donor role is filled by Asp-287.

Belongs to the UbiD family. As to quaternary structure, homohexamer. Prenylated FMN is required as a cofactor. Mn(2+) serves as cofactor.

The protein localises to the cell membrane. The catalysed reaction is a 4-hydroxy-3-(all-trans-polyprenyl)benzoate + H(+) = a 2-(all-trans-polyprenyl)phenol + CO2. It participates in cofactor biosynthesis; ubiquinone biosynthesis. Functionally, catalyzes the decarboxylation of 3-octaprenyl-4-hydroxy benzoate to 2-octaprenylphenol, an intermediate step in ubiquinone biosynthesis. The sequence is that of 3-octaprenyl-4-hydroxybenzoate carboxy-lyase from Pseudomonas syringae pv. tomato (strain ATCC BAA-871 / DC3000).